A 701-amino-acid polypeptide reads, in one-letter code: Protein SOSEKI 1 (701 aa).

Positions 8–101 (LSAQVLYQLS…YVLRASELID (94 aa)) are DIX-like oligomerization domain. Disordered regions lie at residues 238-262 (STVHGVHTPPSPSLKSSTELPFSPG), 300-329 (LPPNTHSTHEDNSFWRDSRSKSPSPSSLNE), 366-389 (PYNTCEGASTKIPESKHNSPYRTK), and 538-575 (IASSKPLPPGFHKGTNDTKPVQITPRRTPRNSIPLASP). Over residues 306–319 (STHEDNSFWRDSRS) the composition is skewed to basic and acidic residues. The C2HC/C3H-type zinc-finger motif lies at 658 to 687 (ILQECSICRRTFKPDSLQVHMRGCHPPQYA). Positions 662, 665, 677, and 681 each coordinate Zn(2+).

This sequence belongs to the SOSEKI family. Homodimer. Forms long polymer filaments with other SOKs proteins polymers crucial for polar localization and biological activity. Zn(2+) is required as a cofactor.

It localises to the cell membrane. SOSEKI proteins locally interpret global polarity cues and can influence cell division orientation to coordinate cell polarization relative to body axes. In Physcomitrium patens (Spreading-leaved earth moss), this protein is Protein SOSEKI 1.